The primary structure comprises 246 residues: 1-(5-phosphoribosyl)-5-[(5-phosphoribosylamino)methylideneamino] imidazole-4-carboxamide isomerase (246 aa).

Residue Asp-8 is the Proton acceptor of the active site. Asp-131 functions as the Proton donor in the catalytic mechanism.

Belongs to the HisA/HisF family.

The protein resides in the cytoplasm. The catalysed reaction is 1-(5-phospho-beta-D-ribosyl)-5-[(5-phospho-beta-D-ribosylamino)methylideneamino]imidazole-4-carboxamide = 5-[(5-phospho-1-deoxy-D-ribulos-1-ylimino)methylamino]-1-(5-phospho-beta-D-ribosyl)imidazole-4-carboxamide. It participates in amino-acid biosynthesis; L-histidine biosynthesis; L-histidine from 5-phospho-alpha-D-ribose 1-diphosphate: step 4/9. This Lactococcus lactis subsp. cremoris (strain SK11) protein is 1-(5-phosphoribosyl)-5-[(5-phosphoribosylamino)methylideneamino] imidazole-4-carboxamide isomerase.